We begin with the raw amino-acid sequence, 913 residues long: Eukaryotic translation initiation factor 3 subunit C (913 aa).

The interval 1 to 31 (MSRFFANGSDSESESSEEEVQASNFNKANNF) is disordered. The segment covering 11–20 (SESESSEEEV) has biased composition (acidic residues). A compositionally biased stretch (polar residues) spans 21–31 (QASNFNKANNF). Ser-34, Ser-165, Ser-177, and Ser-186 each carry phosphoserine. Disordered regions lie at residues 157–195 (FREA…AGTG) and 208–285 (PTKV…EDGE). The span at 162–171 (DQESDVDEGE) shows a compositional bias: acidic residues. Basic and acidic residues predominate over residues 172-184 (GEAHDSDAERAGA). The segment covering 214–239 (DEDDSDDSIDWDSDTESETESSEDEN) has biased composition (acidic residues). Positions 244 to 263 (MRERFLKRTTEKEDKDDDKR) are enriched in basic and acidic residues. A compositionally biased stretch (basic residues) spans 264 to 276 (KDKRKEQKHKVRK). The 177-residue stretch at 645 to 821 (FHMHINLELL…ETVVMHRSEP (177 aa)) folds into the PCI domain. Positions 856-913 (RGNMGNRDRGYNRNQNNQGGNWGGQRRDNRNQRNRNQRGHHKQQQQQQQQQVQTIEEE) are disordered. Positions 887-898 (QRNRNQRGHHKQ) are enriched in basic residues.

This sequence belongs to the eIF-3 subunit C family. In terms of assembly, component of the eukaryotic translation initiation factor 3 (eIF-3) complex. The eIF-3 complex interacts with pix.

It is found in the cytoplasm. Functionally, component of the eukaryotic translation initiation factor 3 (eIF-3) complex, which is involved in protein synthesis of a specialized repertoire of mRNAs and, together with other initiation factors, stimulates binding of mRNA and methionyl-tRNAi to the 40S ribosome. The eIF-3 complex specifically targets and initiates translation of a subset of mRNAs involved in cell proliferation. This chain is Eukaryotic translation initiation factor 3 subunit C, found in Drosophila virilis (Fruit fly).